The following is a 231-amino-acid chain: Ribonuclease 3 (231 aa).

Positions 5-134 constitute an RNase III domain; it reads QKGIKEDFGI…FIGALYKDQG (130 aa). Position 47 (E47) interacts with Mg(2+). D51 is a catalytic residue. The Mg(2+) site is built by D120 and E123. E123 is an active-site residue. The DRBM domain occupies 160-230; it reads DYKSKLQELL…AKKAYQDVTP (71 aa).

The protein belongs to the ribonuclease III family. As to quaternary structure, homodimer. It depends on Mg(2+) as a cofactor.

It is found in the cytoplasm. It catalyses the reaction Endonucleolytic cleavage to 5'-phosphomonoester.. Its function is as follows. Digests double-stranded RNA. Involved in the processing of primary rRNA transcript to yield the immediate precursors to the large and small rRNAs (23S and 16S). Processes some mRNAs, and tRNAs when they are encoded in the rRNA operon. Processes pre-crRNA and tracrRNA of type II CRISPR loci if present in the organism. This chain is Ribonuclease 3, found in Oenococcus oeni (strain ATCC BAA-331 / PSU-1).